Reading from the N-terminus, the 192-residue chain is 3-isopropylmalate dehydratase small subunit (192 aa).

The protein belongs to the LeuD family. LeuD type 1 subfamily. As to quaternary structure, heterodimer of LeuC and LeuD.

It catalyses the reaction (2R,3S)-3-isopropylmalate = (2S)-2-isopropylmalate. It participates in amino-acid biosynthesis; L-leucine biosynthesis; L-leucine from 3-methyl-2-oxobutanoate: step 2/4. Functionally, catalyzes the isomerization between 2-isopropylmalate and 3-isopropylmalate, via the formation of 2-isopropylmaleate. In Oceanobacillus iheyensis (strain DSM 14371 / CIP 107618 / JCM 11309 / KCTC 3954 / HTE831), this protein is 3-isopropylmalate dehydratase small subunit.